The sequence spans 64 residues: Large ribosomal subunit protein uL29 (64 aa).

Belongs to the universal ribosomal protein uL29 family.

In Cupriavidus metallidurans (strain ATCC 43123 / DSM 2839 / NBRC 102507 / CH34) (Ralstonia metallidurans), this protein is Large ribosomal subunit protein uL29.